The chain runs to 614 residues: Sodium- and chloride-dependent betaine transporter (614 aa).

The Cytoplasmic segment spans residues 1–44 (MDRKVTVHEDGCPVVSWVPEEGEMMDQKDKDQVKDRGQWTNKME). Helical transmembrane passes span 45–65 (FVLS…FPYL), 73–92 (AFFI…VFFL), and 117–137 (GIGM…IIIL). At 138 to 210 (AWALFYLFSS…SGIHDLGSLR (73 aa)) the chain is on the extracellular side. N171 and N183 each carry an N-linked (GlcNAc...) asparagine glycan. The next 9 membrane-spanning stretches (helical) occupy residues 211-229 (WELA…FCIW), 238-255 (VVYF…ILLI), 291-308 (IFFS…LGSY), 320-341 (IALC…FSIL), 374-393 (MPLS…FLGL), 423-441 (LLIL…LLVT), 458-478 (GICL…VYGA), 499-518 (ISWL…FSLS), and 538-556 (IGWL…FIII). The Cytoplasmic segment spans residues 557–614 (TLLKTQGSFKKRLQRLITPDPSLPQPGRRSPQDGSSAQNCSTSPVKQELIAWEKETHL). The disordered stretch occupies residues 574-600 (TPDPSLPQPGRRSPQDGSSAQNCSTSP). S586 carries the post-translational modification Phosphoserine. Residues 588-600 (QDGSSAQNCSTSP) are compositionally biased toward polar residues.

The protein belongs to the sodium:neurotransmitter symporter (SNF) (TC 2.A.22) family. SLC6A12 subfamily. In terms of assembly, interacts with LIN7C.

It is found in the basolateral cell membrane. It localises to the cell membrane. It catalyses the reaction 4-aminobutanoate(out) + chloride(out) + 3 Na(+)(out) = 4-aminobutanoate(in) + chloride(in) + 3 Na(+)(in). The catalysed reaction is glycine betaine(out) + 2 chloride(out) + 3 Na(+)(out) = glycine betaine(in) + 2 chloride(in) + 3 Na(+)(in). Its function is as follows. Transporter that mediates cellular uptake of betaine and GABA in a sodium- and chloride-dependent process. May have a role in regulation of GABAergic transmission in the brain through the reuptake of GABA into presynaptic terminals, as well as in osmotic regulation. Probably also involved in renal and hepatic osmotic regulation. This is Sodium- and chloride-dependent betaine transporter (Slc6a12) from Rattus norvegicus (Rat).